The following is a 238-amino-acid chain: 7-cyano-7-deazaguanine synthase (238 aa).

12-22 (FSGGQDSTTCL) contributes to the ATP binding site. The Zn(2+) site is built by C191, C200, C203, and C206.

Belongs to the QueC family. Requires Zn(2+) as cofactor.

The enzyme catalyses 7-carboxy-7-deazaguanine + NH4(+) + ATP = 7-cyano-7-deazaguanine + ADP + phosphate + H2O + H(+). The protein operates within purine metabolism; 7-cyano-7-deazaguanine biosynthesis. Catalyzes the ATP-dependent conversion of 7-carboxy-7-deazaguanine (CDG) to 7-cyano-7-deazaguanine (preQ(0)). The polypeptide is 7-cyano-7-deazaguanine synthase (Shewanella oneidensis (strain ATCC 700550 / JCM 31522 / CIP 106686 / LMG 19005 / NCIMB 14063 / MR-1)).